The following is a 166-amino-acid chain: NADH-ubiquinone oxidoreductase chain 6 (166 aa).

The next 5 helical transmembrane spans lie at 1 to 21, 26 to 46, 47 to 67, 86 to 106, and 139 to 159; these read MMYF…AFAS, IYGG…IVSL, GGSF…LVVF, TVVL…YEFF, and CGGW…FVVL.

The protein belongs to the complex I subunit 6 family. In terms of assembly, core subunit of respiratory chain NADH dehydrogenase (Complex I) which is composed of 45 different subunits.

The protein localises to the mitochondrion inner membrane. It carries out the reaction a ubiquinone + NADH + 5 H(+)(in) = a ubiquinol + NAD(+) + 4 H(+)(out). Core subunit of the mitochondrial membrane respiratory chain NADH dehydrogenase (Complex I) which catalyzes electron transfer from NADH through the respiratory chain, using ubiquinone as an electron acceptor. Essential for the catalytic activity and assembly of complex I. The protein is NADH-ubiquinone oxidoreductase chain 6 (MT-ND6) of Tachyglossus aculeatus aculeatus (Southeast Australian short-beaked echidna).